The chain runs to 623 residues: Interleukin-27 receptor subunit alpha (623 aa).

Positions 1–24 are cleaved as a signal peptide; it reads MNRLRVARLTPLELLLSLMSLLLG. At 25 to 510 the chain is on the extracellular side; that stretch reads TRPHGSPGPL…HLPDNRIRWK (486 aa). 2 Fibronectin type-III domains span residues 30–124 and 125–225; these read SPGP…MKPD and TPQI…TPFL. A glycan (N-linked (GlcNAc...) asparagine) is linked at N46. The WSXWS motif motif lies at 211–215; the sequence is WGEWS. N296, N305, N360, N368, and N461 each carry an N-linked (GlcNAc...) asparagine glycan. 2 Fibronectin type-III domains span residues 316–412 and 413–505; these read APCD…VPLA and GPAV…LPDN. A helical membrane pass occupies residues 511–531; sequence ALPWFLSLWGLLLMGCGLSLA. The Cytoplasmic segment spans residues 532-623; the sequence is STRCLQARCL…PTPEELGLLV (92 aa). Positions 552–560 match the Box 1 motif motif; it reads IWERVPDPA.

The protein belongs to the type I cytokine receptor family. Type 2 subfamily. In terms of tissue distribution, expressed in CD4+ and CD8+ T-cells, B-cells, natural killer cells and macrophages. Highest levels in CD4+ T-cells and natural killer cells. Expression highest in Th0 cells.

The protein localises to the membrane. Its function is as follows. Receptor for IL27. Requires IL6ST/GP130 to mediate signal transduction in response to IL27. This signaling system acts through STAT3 and STAT1. Involved in the regulation of Th1-type immune responses. Also appears to be involved in innate defense mechanisms. The protein is Interleukin-27 receptor subunit alpha (Il27ra) of Mus musculus (Mouse).